We begin with the raw amino-acid sequence, 482 residues long: Probable polyamine transporter At1g31820 (482 aa).

11 helical membrane-spanning segments follow: residues 36 to 56 (VSMLPLVFLIFYEVSGGPFGA), 66 to 86 (LLALLGFVIFPFIWCIPEALI), 94 to 114 (FPINGGFVVWVSSALGTFWGF), 143 to 163 (VPALATGLPRVASILILTLLL), 171 to 191 (LTIVGWTAVFMGVFSMLPFAV), 254 to 274 (VIFVALSNFLPLLSGTGAIPL), 294 to 314 (GWLQLWVQAAAATSNMGMFLA), 344 to 364 (TPLLGILFSASGVLLLSGLSF), 367 to 387 (IIAAENLLYCGGMILEFIAFV), 406 to 426 (TVGSILICVPPIVLICLVIVL), and 429 to 449 (IKVALVSFVMVVIGFLMKPCL).

It belongs to the amino acid-polyamine-organocation (APC) superfamily. Polyamine:cation symporter (PHS) (TC 2.A.3.12) family.

It is found in the cell membrane. In terms of biological role, probable cell membrane polyamine/proton symporter involved in the polyamine uptake in cells. The chain is Probable polyamine transporter At1g31820 from Arabidopsis thaliana (Mouse-ear cress).